Here is a 445-residue protein sequence, read N- to C-terminus: 3-phosphoshikimate 1-carboxyvinyltransferase (445 aa).

The tract at residues 1–25 (MTDSNQPMPLQARKSGALHGTARVP) is disordered. Positions 28, 29, and 33 each coordinate 3-phosphoshikimate. Phosphoenolpyruvate is bound at residue Lys28. The phosphoenolpyruvate site is built by Gly101 and Arg129. 3-phosphoshikimate contacts are provided by Ser175, Gln177, Asp328, and Lys355. Gln177 lines the phosphoenolpyruvate pocket. Asp328 functions as the Proton acceptor in the catalytic mechanism. Positions 359 and 402 each coordinate phosphoenolpyruvate.

Belongs to the EPSP synthase family. As to quaternary structure, monomer.

It localises to the cytoplasm. The catalysed reaction is 3-phosphoshikimate + phosphoenolpyruvate = 5-O-(1-carboxyvinyl)-3-phosphoshikimate + phosphate. It participates in metabolic intermediate biosynthesis; chorismate biosynthesis; chorismate from D-erythrose 4-phosphate and phosphoenolpyruvate: step 6/7. In terms of biological role, catalyzes the transfer of the enolpyruvyl moiety of phosphoenolpyruvate (PEP) to the 5-hydroxyl of shikimate-3-phosphate (S3P) to produce enolpyruvyl shikimate-3-phosphate and inorganic phosphate. This Rhodopseudomonas palustris (strain ATCC BAA-98 / CGA009) protein is 3-phosphoshikimate 1-carboxyvinyltransferase.